We begin with the raw amino-acid sequence, 433 residues long: 23S rRNA (uracil(1939)-C(5))-methyltransferase RlmD (433 aa).

One can recognise a TRAM domain in the interval 10–68 (RTTTRQIITVSVNDLDSFGQGVARHNGKTLFIPGLLPQENAEVTVTEDKKQYARAKVVR). The [4Fe-4S] cluster site is built by Cys-81, Cys-87, Cys-90, and Cys-162. S-adenosyl-L-methionine contacts are provided by Gln-265, Phe-294, Asn-299, Glu-315, Asn-342, and Asp-363. The active-site Nucleophile is the Cys-389.

The protein belongs to the class I-like SAM-binding methyltransferase superfamily. RNA M5U methyltransferase family. RlmD subfamily.

It carries out the reaction uridine(1939) in 23S rRNA + S-adenosyl-L-methionine = 5-methyluridine(1939) in 23S rRNA + S-adenosyl-L-homocysteine + H(+). In terms of biological role, catalyzes the formation of 5-methyl-uridine at position 1939 (m5U1939) in 23S rRNA. The polypeptide is 23S rRNA (uracil(1939)-C(5))-methyltransferase RlmD (Shigella sonnei (strain Ss046)).